The sequence spans 482 residues: Scarecrow-like protein 3 (482 aa).

The 435-residue stretch at 45–479 (LKPEERGLYL…RPLYSVSAWR (435 aa)) folds into the GRAS domain. The segment at 52–115 (LYLIHLLLTC…ILKSWPGLYK (64 aa)) is leucine repeat I (LRI). Residues 134–199 (RRLFFEMFPI…EGPPHLRITG (66 aa)) form a VHIID region. The VHIID motif lies at 165-169 (VHVID). The tract at residues 209–241 (QMAHRLIEEAEKLDIPFQFNPVVSRLDCLNVEQ) is leucine repeat II (LRII). The PFYRE stretch occupies residues 250 to 401 (LAVSSVLQLH…KMLFGEEIKN (152 aa)). Residues 302-324 (ENDMSNNNGYSPSGDSASSLPLP) form a disordered region. Positions 305–324 (MSNNNGYSPSGDSASSLPLP) are enriched in polar residues. The segment at 404–479 (SCEGFERRER…RPLYSVSAWR (76 aa)) is SAW.

This sequence belongs to the GRAS family. Binds to zinc finger proteins MGP/IDD3, IDD4, IDD5, BIB/IDD9 and JKD/IDD10. As to expression, expressed in seedlings, root epidermis, leaves, flowers and siliques.

It is found in the nucleus. Functionally, probable transcription factor involved in plant development. In Arabidopsis thaliana (Mouse-ear cress), this protein is Scarecrow-like protein 3.